The sequence spans 579 residues: MLRTHTCGELRVEDEGKKVKLCGWVDRIRDLGGVRFIDLRDRYGETQIVCDVNSKAYETVDELTRESVVLVEGTVRRRPEGTENPNIATGEIEVVAERIEILSKAEPLPFYPNETPKEEMRLRYRYIDLRSKRMRDNIILRYNITRVIRRYFDELGFLEIETPFLTKSTPEGARDFLVPSRLRPGKFYALPQSPQLFKQLLMISGFDRYFQIVRCFRDEDLRADRQPEFTQVDVEMSFVDVEDVLSVSEGMIARVFREAIGMDLKTPFDRITYSEAMEKYGTDKPDRRYGMELRDLGYAFEGTTFRVIRSVLEEGGSVKGFVVPEFASEMTRKKGDELMERAKELGLGGLIWFKVEEKIVSPHLKHLEREFKTIVEKENLKEGDVCLIAAHKDRNLLNEALGTLRLEIGKEYFSHLAKGFDILWVVDFPYFEWSEEEERFVARHHPFTMPVEETLGDDHTKVKAKAYDIVINGYEVGGGSIRIHKREIQEKIFKLLGMREEEAREKFGFFLEAFKYGVPPHGGIAFGLDRLVAIIAGENSIREVIPFPKTGNGVCLLTGAPSSVDEKQLRELRIRVEEG.

E171 lines the L-aspartate pocket. The segment at 195-198 (QLFK) is aspartate. R217 is an L-aspartate binding site. Residues 217–219 (RDE) and Q226 contribute to the ATP site. An L-aspartate-binding site is contributed by H444. Residue E475 coordinates ATP. Residue R482 coordinates L-aspartate. 527-530 (GLDR) is an ATP binding site.

This sequence belongs to the class-II aminoacyl-tRNA synthetase family. Type 1 subfamily. As to quaternary structure, homodimer.

The protein resides in the cytoplasm. It carries out the reaction tRNA(Asx) + L-aspartate + ATP = L-aspartyl-tRNA(Asx) + AMP + diphosphate. In terms of biological role, aspartyl-tRNA synthetase with relaxed tRNA specificity since it is able to aspartylate not only its cognate tRNA(Asp) but also tRNA(Asn). Reaction proceeds in two steps: L-aspartate is first activated by ATP to form Asp-AMP and then transferred to the acceptor end of tRNA(Asp/Asn). The sequence is that of Aspartate--tRNA(Asp/Asn) ligase from Thermotoga neapolitana (strain ATCC 49049 / DSM 4359 / NBRC 107923 / NS-E).